Consider the following 420-residue polypeptide: UDP-N-acetylglucosamine 1-carboxyvinyltransferase 2 (420 aa).

22-23 (KN) serves as a coordination point for phosphoenolpyruvate. UDP-N-acetyl-alpha-D-glucosamine is bound at residue Arg-92. Residue Cys-116 is the Proton donor of the active site. Position 116 is a 2-(S-cysteinyl)pyruvic acid O-phosphothioketal (Cys-116). UDP-N-acetyl-alpha-D-glucosamine is bound by residues 121 to 125 (RPIDL), Asp-307, and Ile-329.

Belongs to the EPSP synthase family. MurA subfamily.

The protein localises to the cytoplasm. It carries out the reaction phosphoenolpyruvate + UDP-N-acetyl-alpha-D-glucosamine = UDP-N-acetyl-3-O-(1-carboxyvinyl)-alpha-D-glucosamine + phosphate. It participates in cell wall biogenesis; peptidoglycan biosynthesis. Functionally, cell wall formation. Adds enolpyruvyl to UDP-N-acetylglucosamine. The chain is UDP-N-acetylglucosamine 1-carboxyvinyltransferase 2 from Streptococcus thermophilus (strain CNRZ 1066).